A 496-amino-acid chain; its full sequence is NADH-quinone oxidoreductase subunit N (496 aa).

Transmembrane regions (helical) follow at residues 16 to 36, 46 to 66, 79 to 99, 116 to 136, 166 to 186, 208 to 228, 245 to 267, 278 to 298, 304 to 324, 331 to 351, 382 to 402, 422 to 442, and 464 to 484; these read SLSPMLSMMVFALFILIVGAI, CVFCIIAIFVNLGITLDFNGL, ISIISQIIILIASALFIPLAL, FLFMIAGFLFMVSSNNLLIIF, FAMGSLSAGFFAMAIAMFYLA, LIILLGCVFIASAIGFKLSLI, LAGYMSIVPKVAGFIVALRIFAM, DMLYIIAVLTMSLANIMALVQ, MLAFSSIAHAGVVLCALVANS, LFFYWIMFLFANLGAFSMLWV, AVIMGIFMIALAGIPPFSVFW, IIMINSAIAIYYYLKLIVFMF, and VIVGVAVAGTVFAFLFSGAIL.

Belongs to the complex I subunit 2 family. As to quaternary structure, NDH-1 is composed of 14 different subunits. Subunits NuoA, H, J, K, L, M, N constitute the membrane sector of the complex.

It localises to the cell inner membrane. The catalysed reaction is a quinone + NADH + 5 H(+)(in) = a quinol + NAD(+) + 4 H(+)(out). Functionally, NDH-1 shuttles electrons from NADH, via FMN and iron-sulfur (Fe-S) centers, to quinones in the respiratory chain. The immediate electron acceptor for the enzyme in this species is believed to be ubiquinone. Couples the redox reaction to proton translocation (for every two electrons transferred, four hydrogen ions are translocated across the cytoplasmic membrane), and thus conserves the redox energy in a proton gradient. This is NADH-quinone oxidoreductase subunit N from Campylobacter concisus (strain 13826).